The chain runs to 204 residues: Lipid A acyltransferase PagP (204 aa).

An N-terminal signal peptide occupies residues 1–25; that stretch reads MSYKHLISACIFSSLCLGQVNAVLA. Residues H76, D119, and S120 contribute to the active site.

This sequence belongs to the lipid A palmitoyltransferase family. As to quaternary structure, homodimer.

Its subcellular location is the cell outer membrane. The enzyme catalyses a lipid A + a 1,2-diacyl-sn-glycero-3-phosphocholine = a hepta-acyl lipid A + a 2-acyl-sn-glycero-3-phosphocholine. The catalysed reaction is a lipid IVA + a 1,2-diacyl-sn-glycero-3-phosphocholine = a lipid IVB + a 2-acyl-sn-glycero-3-phosphocholine. It catalyses the reaction a lipid IIA + a 1,2-diacyl-sn-glycero-3-phosphocholine = a lipid IIB + a 2-acyl-sn-glycero-3-phosphocholine. Transfers a fatty acid residue from the sn-1 position of a phospholipid to the N-linked hydroxyfatty acid chain on the proximal unit of lipid A or its precursors. The polypeptide is Lipid A acyltransferase PagP (Yersinia enterocolitica serotype O:8 / biotype 1B (strain NCTC 13174 / 8081)).